A 304-amino-acid polypeptide reads, in one-letter code: Dihydroorotate dehydrogenase B (NAD(+)), catalytic subunit (304 aa).

FMN is bound by residues S22 and 46 to 47; that span reads KA. Residues K46 and 70–74 contribute to the substrate site; that span reads NAIGL. 2 residues coordinate FMN: N100 and N128. Substrate is bound at residue N128. The active-site Nucleophile is the C131. FMN contacts are provided by K166 and I192. 193–194 is a binding site for substrate; it reads NT. FMN-binding positions include G218, 244-245, and 266-267; these read GG and GT.

Belongs to the dihydroorotate dehydrogenase family. Type 1 subfamily. Heterotetramer of 2 PyrK and 2 PyrD type B subunits. It depends on FMN as a cofactor.

It is found in the cytoplasm. It carries out the reaction (S)-dihydroorotate + NAD(+) = orotate + NADH + H(+). The protein operates within pyrimidine metabolism; UMP biosynthesis via de novo pathway; orotate from (S)-dihydroorotate (NAD(+) route): step 1/1. Functionally, catalyzes the conversion of dihydroorotate to orotate with NAD(+) as electron acceptor. This Fusobacterium nucleatum subsp. nucleatum (strain ATCC 25586 / DSM 15643 / BCRC 10681 / CIP 101130 / JCM 8532 / KCTC 2640 / LMG 13131 / VPI 4355) protein is Dihydroorotate dehydrogenase B (NAD(+)), catalytic subunit (pyrD).